A 780-amino-acid chain; its full sequence is Kazrin (780 aa).

Residues 79 to 261 (AQVLLREEVV…LATLTKDVPK (183 aa)) adopt a coiled-coil conformation. Residues 295 to 430 (QQTLYHSHPP…TRHSLSLSEG (136 aa)) form a disordered region. A phosphoserine mark is found at serine 357, serine 372, and serine 392. The segment covering 416–427 (SQCSPTRHSLSL) has biased composition (polar residues). SAM domains follow at residues 451–516 (WKAG…YRDA), 529–593 (DHHW…LYQV), and 617–684 (WTNQ…STVF). The tract at residues 692–780 (IRESERFGTP…EYSSLEVTNV (89 aa)) is disordered. The span at 760–771 (LQGRPEQCRLEE) shows a compositional bias: basic and acidic residues.

The protein belongs to the kazrin family.

The protein localises to the cell junction. Its subcellular location is the nucleus. It is found in the cytoplasm. It localises to the cytoskeleton. Component of the cornified envelope of keratinocytes. May be involved in the interplay between adherens junctions and desmosomes. The function in the nucleus is not known. This Rattus norvegicus (Rat) protein is Kazrin (Kazn).